A 203-amino-acid chain; its full sequence is Formate hydrogenlyase subunit 2 (203 aa).

4Fe-4S ferredoxin-type domains lie at 2-32 (NRFV…HGLQ), 42-72 (NEKE…TRVD), 73-102 (GAVQ…FSGS), and 137-169 (RAIA…LVDN). [4Fe-4S] cluster contacts are provided by Cys12, Cys15, Cys18, Cys22, Cys51, Cys54, Cys59, Cys63, Cys82, Cys85, Cys88, Cys92, Cys143, Cys146, Cys155, and Cys159.

FHL comprises of a formate dehydrogenase, unidentified electron carriers and a hydrogenase (isoenzyme 3). In this non-energy conserving pathway, molecular hydrogen and carbodioxide are released from formate. The cofactor is [4Fe-4S] cluster.

Its function is as follows. Probable electron transfer protein for hydrogenase 3. In Escherichia coli (strain K12), this protein is Formate hydrogenlyase subunit 2 (hycB).